We begin with the raw amino-acid sequence, 37 residues long: Large ribosomal subunit protein bL36 (37 aa).

This sequence belongs to the bacterial ribosomal protein bL36 family.

This chain is Large ribosomal subunit protein bL36, found in Alkalilimnicola ehrlichii (strain ATCC BAA-1101 / DSM 17681 / MLHE-1).